Consider the following 1723-residue polypeptide: Lymphocyte antigen 75 (1723 aa).

The N-terminal stretch at 1–27 (MRTGRVTPGLAAGLLLLLLRSFGLVEP) is a signal peptide. Residues 28 to 1667 (SESSGNDPFT…AVCKIPLSPD (1640 aa)) lie on the Extracellular side of the membrane. Residues 33-182 (NDPFTIVHEN…FLIGETWYHD (150 aa)) enclose the Ricin B-type lectin domain. Asparagine 135 carries an N-linked (GlcNAc...) asparagine glycan. In terms of domain architecture, Fibronectin type-II spans 164-211 (SYGRPCEFPFLIGETWYHDCIHDEDHSGPWCATTLSYEYDQKWGICLL). Cystine bridges form between cysteine 169-cysteine 194, cysteine 183-cysteine 209, cysteine 247-cysteine 340, and cysteine 317-cysteine 332. Positions 225–341 (QIGSCYQFNN…CESQQPYVCK (117 aa)) constitute a C-type lectin 1 domain. Residues asparagine 345 and asparagine 377 are each glycosylated (N-linked (GlcNAc...) asparagine). 3 consecutive C-type lectin domains span residues 368-486 (NNGF…YVCK), 493-625 (KDAE…ICKK), and 652-791 (SSLS…WVCQ). 2 cysteine pairs are disulfide-bonded: cysteine 389–cysteine 485 and cysteine 462–cysteine 477. The N-linked (GlcNAc...) asparagine glycan is linked to asparagine 529. 3 disulfide bridges follow: cysteine 597–cysteine 614, cysteine 678–cysteine 790, and cysteine 752–cysteine 782. Residues asparagine 843 and asparagine 865 are each glycosylated (N-linked (GlcNAc...) asparagine). Phosphotyrosine is present on tyrosine 934. N-linked (GlcNAc...) asparagine glycosylation is found at asparagine 935, asparagine 1077, and asparagine 1104. The C-type lectin 5 domain occupies 959 to 1092 (FQNKCFLKVN…ERHSLSLCQK (134 aa)). A disulfide bridge connects residues cysteine 1061 and cysteine 1081. Residues 1111–1223 (YLNNLYKIIS…DNQPGAICYY (113 aa)) enclose the C-type lectin 6 domain. Cysteine 1198 and cysteine 1212 are joined by a disulfide. N-linked (GlcNAc...) asparagine glycans are attached at residues asparagine 1226, asparagine 1321, and asparagine 1393. One can recognise a C-type lectin 7 domain in the interval 1252–1375 (FQNSCYNFMI…VIEETLHFYQ (124 aa)). C-type lectin domains are found at residues 1402-1514 (YKDG…ICYK) and 1543-1662 (YGGH…VCKI). Cysteine 1489 and cysteine 1503 are disulfide-bonded. N-linked (GlcNAc...) asparagine glycosylation is found at asparagine 1594 and asparagine 1627. Residues cysteine 1636 and cysteine 1651 are joined by a disulfide bond. The chain crosses the membrane as a helical span at residues 1668 to 1692 (YTGIAILFAVLCLLGLISLAIWFLL). Topologically, residues 1693–1723 (QRSHIRWTGFSSVRYEHGTNEDEVMLPSFHD) are cytoplasmic. Residues serine 1704 and serine 1720 each carry the phosphoserine modification.

In terms of processing, N-glycosylated. As to expression, expressed in dendritic and thymic epithelial cells and lymph nodes.

The protein localises to the membrane. Its function is as follows. Acts as an endocytic receptor to direct captured antigens from the extracellular space to a specialized antigen-processing compartment. Causes reduced proliferation of B lymphocytes. The sequence is that of Lymphocyte antigen 75 (Ly75) from Mus musculus (Mouse).